The primary structure comprises 399 residues: C-type lectin domain family 4 member M (399 aa).

The Cytoplasmic segment spans residues 1 to 49; that stretch reads MSDSKEQRVQPLGLLEEDPTTSGIRLFPRDFQFQQTHGHKSSTGCLGHG. Residues 14–15 carry the Endocytosis signal motif; the sequence is LL. A helical; Signal-anchor for type II membrane protein membrane pass occupies residues 50-70; that stretch reads PLVLQLLSFTLLAGVLVAILV. Residues 71–399 are Extracellular-facing; the sequence is QVYKVPSSLS…KKPTACFRDE (329 aa). The N-linked (GlcNAc...) asparagine glycan is linked to Asn92. A run of 7 repeats spans residues 108–130, 131–153, 154–176, 177–199, 200–222, 223–245, and 246–268. The 7 X approximate tandem repeats stretch occupies residues 108 to 269; it reads KLQEIYQELI…AFERLCCRCP (162 aa). 4 disulfides stabilise this stretch: Cys265–Cys395, Cys268–Cys279, Cys296–Cys389, and Cys368–Cys381. The region spanning 274–390 is the C-type lectin domain; the sequence is FFQGNCYFIS…CNVDNYWICK (117 aa). Ca(2+) is bound by residues Glu359, Asn361, Ser363, Glu366, Asn377, and Asp378. Asn361 is a glycosylation site (N-linked (GlcNAc...) asparagine).

In terms of assembly, homotetramer.

The protein localises to the membrane. Probable pathogen-recognition receptor involved in peripheral immune surveillance in liver. May mediate the endocytosis of pathogens which are subsequently degraded in lysosomal compartments. Probably recognizes in a calcium-dependent manner high mannose N-linked oligosaccharides in a variety of pathogen antigens. Is a receptor for ICAM3, probably by binding to mannose-like carbohydrates. The chain is C-type lectin domain family 4 member M (CLEC4M) from Hylobates lar (Lar gibbon).